The following is a 438-amino-acid chain: Choline monooxygenase, chloroplastic (438 aa).

The transit peptide at 1–58 (MAASATTMLLKYPTTVCGIPNSSANNSTDPSNNIVQIPQTTTTNSPLLKFRTPNKPVN) directs the protein to the chloroplast. Residues 121–228 (WQVAGYSDQV…VAVWGPFILI (108 aa)) form the Rieske domain. Positions 163, 165, 182, and 185 each coordinate [2Fe-2S] cluster. Histidine 288 and histidine 293 together coordinate Fe cation.

This sequence belongs to the choline monooxygenase family. [2Fe-2S] cluster serves as cofactor. It depends on Fe cation as a cofactor. Mg(2+) is required as a cofactor. As to expression, expressed in roots and leaves.

It localises to the plastid. It is found in the chloroplast stroma. The catalysed reaction is choline + 2 reduced [2Fe-2S]-[ferredoxin] + O2 + 2 H(+) = betaine aldehyde hydrate + 2 oxidized [2Fe-2S]-[ferredoxin] + H2O. Its pathway is amine and polyamine biosynthesis; betaine biosynthesis via choline pathway; betaine aldehyde from choline (monooxygenase route): step 1/1. Its function is as follows. Catalyzes the first step of the osmoprotectant glycine betaine synthesis. The protein is Choline monooxygenase, chloroplastic (CMO) of Atriplex hortensis (Mountain spinach).